Here is a 96-residue protein sequence, read N- to C-terminus: Small cysteine and glycine repeat-containing protein 7 (96 aa).

The 14 X 2 AA repeats of CG stretch occupies residues 4-80 (CGCGSCGGCG…TCGSCGCGCG (77 aa)).

The protein belongs to the KRTAP type 28 family.

Functionally, in the hair cortex, hair keratin intermediate filaments are embedded in an interfilamentous matrix, consisting of hair keratin-associated proteins (KRTAP), which are essential for the formation of a rigid and resistant hair shaft through their extensive disulfide bond cross-linking with abundant cysteine residues of hair keratins. The matrix proteins include the high-sulfur and high-glycine-tyrosine keratins. This is Small cysteine and glycine repeat-containing protein 7 from Homo sapiens (Human).